A 227-amino-acid polypeptide reads, in one-letter code: Claudin-15 (227 aa).

Residue Met1 is a topological domain, cytoplasmic. The helical transmembrane segment at 2–24 (SVAVETFGFFMSALGLLMLGLTL) threads the bilayer. Over 25-74 (SNSYWRVSTVHGNVITTNTIFENLWYSCATDSLGVSNCWDFPSMLALSGY) the chain is Extracellular. Cysteines 52 and 62 form a disulfide. Residues 75 to 99 (VQGCRALMITAILLGFLGLFLGMVG) traverse the membrane as a helical segment. Residues 100–115 (LRCTNVGNMDLSKKAK) lie on the Cytoplasmic side of the membrane. Ser111 is modified (phosphoserine). Residues 116–140 (LLAIAGTLHILAGACGMVAISWYAV) form a helical membrane-spanning segment. The Extracellular portion of the chain corresponds to 141–159 (NITTDFFNPLYAGTKYELG). The tract at residues 146-147 (FF) is important for the formation of tight-junction strand-like structures. A helical transmembrane segment spans residues 160–182 (PALYLGWSASLLSILGGICVFST). Topologically, residues 183-227 (CCCSSKEEPATRAGLPYKPSTVVIPRATSDESDISFGKYGKNAYV) are cytoplasmic. Ser211, Ser214, and Ser217 each carry phosphoserine.

The protein belongs to the claudin family. As to quaternary structure, can form homo- and heteropolymeric tight junction strands. Post-translationally, palmitoylated when heterogeneously expressed in S.frugiperda cells. In terms of tissue distribution, detected in duodenum, jejunum and ileum. Detected on intestinal villi and crypts (at protein level). Ubiquitous. Detected in small and large intestine, colon, jejunum, heart, kidney and lung.

It is found in the cell junction. It localises to the tight junction. The protein localises to the cell membrane. It catalyses the reaction Na(+)(in) = Na(+)(out). The enzyme catalyses K(+)(in) = K(+)(out). It carries out the reaction Cs(+)(in) = Cs(+)(out). The catalysed reaction is Rb(+)(in) = Rb(+)(out). It catalyses the reaction Li(+)(in) = Li(+)(out). The enzyme catalyses NH4(+)(in) = NH4(+)(out). It carries out the reaction methylamine(out) = methylamine(in). The catalysed reaction is H2O(in) = H2O(out). In terms of biological role, forms paracellular channels: polymerizes in tight junction strands with cation- and water-selective channels through the strands, conveying epithelial permeability in a process known as paracellular tight junction permeability. In intestinal epithelium, allows for sodium and water fluxes from the peritoneal side to the lumen of the intestine to regulate nutrient absorption and intestinal morphogenesis. This is Claudin-15 from Mus musculus (Mouse).